The chain runs to 491 residues: Probable glycine dehydrogenase (decarboxylating) subunit 2 (491 aa).

Residue Lys273 is modified to N6-(pyridoxal phosphate)lysine.

Belongs to the GcvP family. C-terminal subunit subfamily. As to quaternary structure, the glycine cleavage system is composed of four proteins: P, T, L and H. In this organism, the P 'protein' is a heterodimer of two subunits. It depends on pyridoxal 5'-phosphate as a cofactor.

It carries out the reaction N(6)-[(R)-lipoyl]-L-lysyl-[glycine-cleavage complex H protein] + glycine + H(+) = N(6)-[(R)-S(8)-aminomethyldihydrolipoyl]-L-lysyl-[glycine-cleavage complex H protein] + CO2. Its function is as follows. The glycine cleavage system catalyzes the degradation of glycine. The P protein binds the alpha-amino group of glycine through its pyridoxal phosphate cofactor; CO(2) is released and the remaining methylamine moiety is then transferred to the lipoamide cofactor of the H protein. The chain is Probable glycine dehydrogenase (decarboxylating) subunit 2 from Bacillus cereus (strain AH187).